Here is a 762-residue protein sequence, read N- to C-terminus: Coleoptile phototropism protein 1 (762 aa).

Residues 1–12 (MWESESESHGGE) are compositionally biased toward basic and acidic residues. The tract at residues 1-29 (MWESESESHGGERGLVPVGGGGGSGRHEA) is disordered. The BTB domain maps to 51–128 (SDLLVKVGDV…SYGMAVDLTA (78 aa)). The span at 227-238 (PAAIRGGGGSGG) shows a compositional bias: gly residues. 4 disordered regions span residues 227–264 (PAAI…RQAV), 460–495 (MAVA…ASAS), 687–718 (QVDG…AWSS), and 731–762 (GADA…NSIS). The NPH3 domain maps to 268–607 (DWWFEDVSVL…VQVLFTEQVK (340 aa)). Residues 654 to 691 (AAAKKDINTLKFELESMKAKYLELQHEMDALQKQVDGR) are a coiled coil. The segment covering 696–709 (PSPAAAKIGKQQQQ) has biased composition (low complexity). Gly residues predominate over residues 736–747 (AGGGVAPPGGGE). Residues 752 to 762 (KGPRRWRNSIS) show a composition bias toward basic residues.

This sequence belongs to the NPH3 family.

It functions in the pathway protein modification; protein ubiquitination. In terms of biological role, may act as a substrate-specific adapter of an E3 ubiquitin-protein ligase complex (CUL3-RBX1-BTB) which mediates the ubiquitination and subsequent proteasomal degradation of target proteins. Plays a role as signal transduction component in coleoptile phototropism and lateral translocation of auxin. This chain is Coleoptile phototropism protein 1 (CPT1), found in Oryza sativa subsp. japonica (Rice).